The following is a 180-amino-acid chain: Major urinary protein 5 (180 aa).

A signal peptide spans 1–18 (MKLLLLLCLELTLVYVHA). A disulfide bridge links cysteine 82 with cysteine 175.

The protein belongs to the calycin superfamily. Lipocalin family.

Its subcellular location is the secreted. Functionally, major urinary proteins (Mups) bind pheromones, and thus stabilize them to allow slow release into the air from urine marks. May protect pheromones from oxidation. May also act as pheromones themselves. In this context, they play a role in the regulation of social behaviors, such as aggression, mating, pup-suckling, territory establishment and dominance. The sequence is that of Major urinary protein 5 from Mus musculus (Mouse).